We begin with the raw amino-acid sequence, 262 residues long: Shikimate dehydrogenase (NADP(+)) (262 aa).

Residues 15–17 (SRS) and threonine 62 contribute to the shikimate site. The active-site Proton acceptor is the lysine 66. Glutamate 78 provides a ligand contact to NADP(+). Residues asparagine 87 and aspartate 102 each contribute to the shikimate site. Residues 126 to 130 (GAGGA), 150 to 155 (NRTQQR), and methionine 214 each bind NADP(+). Position 216 (tyrosine 216) interacts with shikimate. Position 236 (glycine 236) interacts with NADP(+).

Belongs to the shikimate dehydrogenase family. Homodimer.

The catalysed reaction is shikimate + NADP(+) = 3-dehydroshikimate + NADPH + H(+). Its pathway is metabolic intermediate biosynthesis; chorismate biosynthesis; chorismate from D-erythrose 4-phosphate and phosphoenolpyruvate: step 4/7. Its function is as follows. Involved in the biosynthesis of the chorismate, which leads to the biosynthesis of aromatic amino acids. Catalyzes the reversible NADPH linked reduction of 3-dehydroshikimate (DHSA) to yield shikimate (SA). This Acinetobacter baylyi (strain ATCC 33305 / BD413 / ADP1) protein is Shikimate dehydrogenase (NADP(+)).